The sequence spans 280 residues: Lacto-N-neotetraose biosynthesis glycosyltransferase LgtE (280 aa).

The protein belongs to the glycosyltransferase 25 family.

The protein operates within glycan metabolism; lacto-N-neotetraose biosynthesis. Its pathway is bacterial outer membrane biogenesis; lipooligosaccharide biosynthesis. Its function is as follows. Adds the first galactose to the lacto-N-tetraose chain in lipooligosaccharide (LOS). The protein is Lacto-N-neotetraose biosynthesis glycosyltransferase LgtE (lgtE) of Neisseria meningitidis serogroup B (strain ATCC BAA-335 / MC58).